The following is a 177-amino-acid chain: uncharacterized protein (177 aa).

Positions 122–177 are disordered; the sequence is LPFTRNGSGQQSNKLRDPKKGRTHKPKPSEKHKKNKTGKKGAQEKTHRSRSSRKGN. Basic residues-rich tracts occupy residues 142–160 and 168–177; these read GRTH…KTGK and HRSRSSRKGN.

This is an uncharacterized protein from Saccharomyces cerevisiae (strain ATCC 204508 / S288c) (Baker's yeast).